The chain runs to 149 residues: Urease accessory protein UreE (149 aa).

It belongs to the UreE family.

Its subcellular location is the cytoplasm. Functionally, involved in urease metallocenter assembly. Binds nickel. Probably functions as a nickel donor during metallocenter assembly. The polypeptide is Urease accessory protein UreE (Synechococcus sp. (strain JA-3-3Ab) (Cyanobacteria bacterium Yellowstone A-Prime)).